Reading from the N-terminus, the 567-residue chain is Sporulation-specific protein 5 (567 aa).

Positions methionine 1–serine 18 are enriched in polar residues. 2 disordered regions span residues methionine 1–asparagine 39 and isoleucine 52–asparagine 76. Residues proline 21–threonine 35 are compositionally biased toward low complexity. Residues proline 56 to serine 66 are compositionally biased toward polar residues. 2 consecutive RRM domains span residues arginine 296–aspartate 380 and threonine 384–serine 462.

It is found in the cytoplasm. RNA-binding protein which plays a role in sporulation. Regulates the progression of meiosis I and may function in the vicinity of the Mei2 dot. The chain is Sporulation-specific protein 5 (spo5) from Schizosaccharomyces pombe (strain 972 / ATCC 24843) (Fission yeast).